The chain runs to 232 residues: Thiamine import ATP-binding protein ThiQ (232 aa).

Residues L2–I230 enclose the ABC transporter domain. An ATP-binding site is contributed by G32–S39.

It belongs to the ABC transporter superfamily. Thiamine importer (TC 3.A.1.19.1) family. As to quaternary structure, the complex is composed of two ATP-binding proteins (ThiQ), two transmembrane proteins (ThiP) and a solute-binding protein (ThiB).

It is found in the cell inner membrane. It catalyses the reaction thiamine(out) + ATP + H2O = thiamine(in) + ADP + phosphate + H(+). Its function is as follows. Part of the ABC transporter complex ThiBPQ involved in thiamine import. Responsible for energy coupling to the transport system. The protein is Thiamine import ATP-binding protein ThiQ of Escherichia coli O6:H1 (strain CFT073 / ATCC 700928 / UPEC).